A 345-amino-acid chain; its full sequence is Methionine import ATP-binding protein MetN (345 aa).

The region spanning isoleucine 2 to isoleucine 241 is the ABC transporter domain. Glycine 38 to serine 45 is an ATP binding site.

It belongs to the ABC transporter superfamily. Methionine importer (TC 3.A.1.24) family. As to quaternary structure, the complex is composed of two ATP-binding proteins (MetN), two transmembrane proteins (MetI) and a solute-binding protein (MetQ).

The protein localises to the cell inner membrane. It catalyses the reaction L-methionine(out) + ATP + H2O = L-methionine(in) + ADP + phosphate + H(+). The catalysed reaction is D-methionine(out) + ATP + H2O = D-methionine(in) + ADP + phosphate + H(+). In terms of biological role, part of the ABC transporter complex MetNIQ involved in methionine import. Responsible for energy coupling to the transport system. In Histophilus somni (strain 129Pt) (Haemophilus somnus), this protein is Methionine import ATP-binding protein MetN.